We begin with the raw amino-acid sequence, 852 residues long: Glutamine--tRNA ligase (852 aa).

A disordered region spans residues 1–42; the sequence is MGAFGWEQDRGAPFSGRSPRILTRMTDAPRPTAGADAPARPP. The segment at 1–635 is glutaminyl-tRNA synthetase; it reads MGAFGWEQDR…ITLKDTWGKQ (635 aa). The segment covering 28–38 has biased composition (low complexity); it reads APRPTAGADAP. A 'HIGH' region motif is present at residues 74-84; sequence PDPSGYAHLGH. Residues Asp107 and Tyr252 each contribute to the L-glutamine site. The short motif at 308 to 312 is the 'KMSKS' region element; it reads ITSKR. Disordered stretches follow at residues 533 to 562 and 632 to 681; these read EGEN…TAPV and WGKQ…LTPE. The gatB-like stretch occupies residues 636–852; that stretch reads GGGTQQKAEG…LAAALKDALA (217 aa). Over residues 664 to 675 the composition is skewed to low complexity; it reads SSSPAKAHAPKA.

The protein in the N-terminal section; belongs to the class-I aminoacyl-tRNA synthetase family. This sequence in the C-terminal section; belongs to the GatB/GatE family. Monomer.

The protein localises to the cytoplasm. It catalyses the reaction tRNA(Gln) + L-glutamine + ATP = L-glutaminyl-tRNA(Gln) + AMP + diphosphate. The chain is Glutamine--tRNA ligase from Deinococcus radiodurans (strain ATCC 13939 / DSM 20539 / JCM 16871 / CCUG 27074 / LMG 4051 / NBRC 15346 / NCIMB 9279 / VKM B-1422 / R1).